Consider the following 305-residue polypeptide: Small ribosomal subunit protein bS1B (305 aa).

S1 motif domains lie at 29 to 98, 116 to 180, and 194 to 262; these read GQTV…LSRR, GKTL…LTQR, and GNIY…LSTR.

It belongs to the bacterial ribosomal protein bS1 family.

Functionally, binds mRNA. The polypeptide is Small ribosomal subunit protein bS1B (rps1b) (Synechocystis sp. (strain ATCC 27184 / PCC 6803 / Kazusa)).